Reading from the N-terminus, the 163-residue chain is Epithelial membrane protein 3 (163 aa).

The helical transmembrane segment at 4 to 24 threads the bilayer; the sequence is LLLVVSALHILILVLLFVATL. Asn46 and Asn56 each carry an N-linked (GlcNAc...) asparagine glycan. The next 3 helical transmembrane spans lie at 66–86, 100–120, and 139–159; these read VQAL…LFMF, TGLC…IYAI, and FALA…YIHL.

The protein belongs to the PMP-22/EMP/MP20 family.

It is found in the membrane. Functionally, probably involved in cell proliferation and cell-cell interactions. The chain is Epithelial membrane protein 3 (Emp3) from Mus musculus (Mouse).